The chain runs to 141 residues: Large ribosomal subunit protein uL11 (141 aa).

It belongs to the universal ribosomal protein uL11 family. Part of the ribosomal stalk of the 50S ribosomal subunit. Interacts with L10 and the large rRNA to form the base of the stalk. L10 forms an elongated spine to which L12 dimers bind in a sequential fashion forming a multimeric L10(L12)X complex. Post-translationally, one or more lysine residues are methylated.

Forms part of the ribosomal stalk which helps the ribosome interact with GTP-bound translation factors. This Prochlorococcus marinus (strain MIT 9215) protein is Large ribosomal subunit protein uL11.